Consider the following 562-residue polypeptide: DNA ligase (562 aa).

Glu-250 lines the ATP pocket. The active-site N6-AMP-lysine intermediate is the Lys-252. 6 residues coordinate ATP: Arg-257, Arg-272, Glu-302, Phe-342, Arg-417, and Lys-423.

It belongs to the ATP-dependent DNA ligase family. Mg(2+) is required as a cofactor. Zn(2+) serves as cofactor.

The enzyme catalyses ATP + (deoxyribonucleotide)n-3'-hydroxyl + 5'-phospho-(deoxyribonucleotide)m = (deoxyribonucleotide)n+m + AMP + diphosphate.. It carries out the reaction NAD(+) + (deoxyribonucleotide)n-3'-hydroxyl + 5'-phospho-(deoxyribonucleotide)m = (deoxyribonucleotide)n+m + AMP + beta-nicotinamide D-nucleotide.. DNA ligase that seals nicks in double-stranded DNA during DNA replication, DNA recombination and DNA repair. Can use both ATP and NAD(+), but NAD(+) may be a preferred nucleotide cofactor. The protein is DNA ligase of Thermococcus onnurineus (strain NA1).